A 469-amino-acid polypeptide reads, in one-letter code: Glutamate--tRNA ligase (469 aa).

The 'HIGH' region signature appears at 11 to 21; the sequence is PSPTGFIHLGN. Positions 118 to 131 are enriched in basic and acidic residues; sequence GEKPRYDGTWRPEP. The disordered stretch occupies residues 118-138; it reads GEKPRYDGTWRPEPGKVLPEP. A 'KMSKS' region motif is present at residues 243-247; that stretch reads KMSKR. Residue K246 participates in ATP binding.

Belongs to the class-I aminoacyl-tRNA synthetase family. Glutamate--tRNA ligase type 1 subfamily. Monomer.

The protein resides in the cytoplasm. It carries out the reaction tRNA(Glu) + L-glutamate + ATP = L-glutamyl-tRNA(Glu) + AMP + diphosphate. In terms of biological role, catalyzes the attachment of glutamate to tRNA(Glu) in a two-step reaction: glutamate is first activated by ATP to form Glu-AMP and then transferred to the acceptor end of tRNA(Glu). In Burkholderia thailandensis (strain ATCC 700388 / DSM 13276 / CCUG 48851 / CIP 106301 / E264), this protein is Glutamate--tRNA ligase.